The primary structure comprises 87 residues: MAGKSSGDRRKLLRGAKVGKNAAPAKSIRVGVIDYKDVATLRKFISERGKIRARRITGVSVQEQRLIARAVKNAREMALLPYAGSGR.

Residues 1 to 10 (MAGKSSGDRR) are compositionally biased toward basic and acidic residues. Positions 1–23 (MAGKSSGDRRKLLRGAKVGKNAA) are disordered.

It belongs to the bacterial ribosomal protein bS18 family. As to quaternary structure, part of the 30S ribosomal subunit. Forms a tight heterodimer with protein bS6.

Functionally, binds as a heterodimer with protein bS6 to the central domain of the 16S rRNA, where it helps stabilize the platform of the 30S subunit. This chain is Small ribosomal subunit protein bS18, found in Clavibacter sepedonicus (Clavibacter michiganensis subsp. sepedonicus).